The chain runs to 440 residues: Ribosomal protein uS12 methylthiotransferase RimO (440 aa).

An MTTase N-terminal domain is found at 1 to 117; that stretch reads MKIFFISLGC…ITEVIDKVLG (117 aa). [4Fe-4S] cluster contacts are provided by Cys10, Cys46, Cys80, Cys154, Cys158, and Cys161. Residues 140-370 form the Radical SAM core domain; it reads TTGGYYSFLK…MEIQQGIAFE (231 aa). The TRAM domain occupies 373-440; that stretch reads ESMVGRKLKV…KEYDLIGTAE (68 aa).

Belongs to the methylthiotransferase family. RimO subfamily. Requires [4Fe-4S] cluster as cofactor.

It is found in the cytoplasm. The enzyme catalyses L-aspartate(89)-[ribosomal protein uS12]-hydrogen + (sulfur carrier)-SH + AH2 + 2 S-adenosyl-L-methionine = 3-methylsulfanyl-L-aspartate(89)-[ribosomal protein uS12]-hydrogen + (sulfur carrier)-H + 5'-deoxyadenosine + L-methionine + A + S-adenosyl-L-homocysteine + 2 H(+). Catalyzes the methylthiolation of an aspartic acid residue of ribosomal protein uS12. This chain is Ribosomal protein uS12 methylthiotransferase RimO, found in Lachnoclostridium phytofermentans (strain ATCC 700394 / DSM 18823 / ISDg) (Clostridium phytofermentans).